We begin with the raw amino-acid sequence, 158 residues long: Frataxin homolog, mitochondrial (158 aa).

Belongs to the frataxin family. In terms of assembly, monomer. Oligomer.

It is found in the mitochondrion. It catalyses the reaction 4 Fe(2+) + O2 + 4 H(+) = 4 Fe(3+) + 2 H2O. Functionally, promotes the biosynthesis of heme as well as the assembly and repair of iron-sulfur clusters by delivering Fe(2+) to proteins involved in these pathways. May play a role in the protection against iron-catalyzed oxidative stress through its ability to catalyze the oxidation of Fe(2+) to Fe(3+). May be able to store large amounts of the metal in the form of a ferrihydrite mineral by oligomerization. The sequence is that of Frataxin homolog, mitochondrial from Schizosaccharomyces pombe (strain 972 / ATCC 24843) (Fission yeast).